A 484-amino-acid polypeptide reads, in one-letter code: UDP-glycosyltransferase 73B4 (484 aa).

His-18 (proton acceptor) is an active-site residue. His-18 and Asn-89 together coordinate an anthocyanidin. Asp-129 functions as the Charge relay in the catalytic mechanism. UDP-alpha-D-glucose is bound by residues Ala-356, Gln-358, His-373, Trp-376, Asn-377, Ser-378, and Glu-381. Ala-396 contacts an anthocyanidin. 2 residues coordinate UDP-alpha-D-glucose: Glu-397 and Gln-398.

It belongs to the UDP-glycosyltransferase family. Specifically expressed in roots.

It catalyses the reaction a flavonol + UDP-alpha-D-glucose = a flavonol 3-O-beta-D-glucoside + UDP + H(+). Functionally, possesses quercetin 3-O-glucosyltransferase and low 7-O-glucosyltransferase activities in vitro. Also active in vitro on benzoates and benzoate derivatives. Can detoxify the explosive 2,4,6-trinitrotoluene in plant by forming O- or C-glucose conjugates. In Arabidopsis thaliana (Mouse-ear cress), this protein is UDP-glycosyltransferase 73B4 (UGT73B4).